A 118-amino-acid chain; its full sequence is V-type proton ATPase subunit G 2 (118 aa).

Residues R26–R90 are disordered. A compositionally biased stretch (basic and acidic residues) spans Q35 to F55. 2 stretches are compositionally biased toward polar residues: residues Q56 to L69 and R78 to Q89.

Belongs to the V-ATPase G subunit family. In terms of assembly, V-ATPase is a heteromultimeric enzyme made up of two complexes: the ATP-hydrolytic V1 complex and the proton translocation V0 complex. The V1 complex consists of three catalytic AB heterodimers that form a heterohexamer, three peripheral stalks each consisting of EG heterodimers, one central rotor including subunits D and F, and the regulatory subunits C and H. The proton translocation complex V0 consists of the proton transport subunit a, a ring of proteolipid subunits c9c'', rotary subunit d, subunits e and f, and the accessory subunits ATP6AP1/Ac45 and ATP6AP2/PRR.

Its subcellular location is the melanosome. It localises to the cytoplasmic vesicle. The protein localises to the clathrin-coated vesicle membrane. Its function is as follows. Subunit of the V1 complex of vacuolar(H+)-ATPase (V-ATPase), a multisubunit enzyme composed of a peripheral complex (V1) that hydrolyzes ATP and a membrane integral complex (V0) that translocates protons. V-ATPase is responsible for acidifying and maintaining the pH of intracellular compartments and in some cell types, is targeted to the plasma membrane, where it is responsible for acidifying the extracellular environment. The chain is V-type proton ATPase subunit G 2 (ATP6V1G2) from Sus scrofa (Pig).